The chain runs to 363 residues: 3-isopropylmalate dehydrogenase (363 aa).

77 to 90 (GPKWQHLPPDQQPE) serves as a coordination point for NAD(+). Substrate contacts are provided by R98, R108, R137, and D226. 3 residues coordinate Mg(2+): D226, D250, and D254. 284-296 (GSAPDIAGKNIAN) lines the NAD(+) pocket.

It belongs to the isocitrate and isopropylmalate dehydrogenases family. LeuB type 1 subfamily. Homodimer. Requires Mg(2+) as cofactor. Mn(2+) is required as a cofactor.

It localises to the cytoplasm. It carries out the reaction (2R,3S)-3-isopropylmalate + NAD(+) = 4-methyl-2-oxopentanoate + CO2 + NADH. It functions in the pathway amino-acid biosynthesis; L-leucine biosynthesis; L-leucine from 3-methyl-2-oxobutanoate: step 3/4. Functionally, catalyzes the oxidation of 3-carboxy-2-hydroxy-4-methylpentanoate (3-isopropylmalate) to 3-carboxy-4-methyl-2-oxopentanoate. The product decarboxylates to 4-methyl-2 oxopentanoate. This chain is 3-isopropylmalate dehydrogenase, found in Buchnera aphidicola subsp. Pemphigus spyrothecae.